We begin with the raw amino-acid sequence, 317 residues long: Dehydrogenase/reductase SDR family member 12 (317 aa).

NAD(+) is bound by residues serine 50 and isoleucine 52. Serine 175 is a substrate binding site. Positions 201, 205, and 234 each coordinate NAD(+). The active-site Proton acceptor is tyrosine 201.

The protein belongs to the short-chain dehydrogenases/reductases (SDR) family.

Its function is as follows. Putative oxidoreductase. This is Dehydrogenase/reductase SDR family member 12 (DHRS12) from Bos taurus (Bovine).